The chain runs to 431 residues: GTPase Obg (431 aa).

The Obg domain maps to 1 to 158 (MFVDQVKVDV…LTIRMELKVL (158 aa)). In terms of domain architecture, OBG-type G spans 159–335 (ADVGLVGFPS…LLAKTADLLD (177 aa)). Residues 165–172 (GFPSVGKS), 190–194 (FTTLV), 212–215 (DLPG), 282–285 (TKMD), and 316–318 (SSI) each bind GTP. The Mg(2+) site is built by Ser172 and Thr192. In terms of domain architecture, OCT spans 353-431 (YTTEADADFS…ILDYSFQFMD (79 aa)).

It belongs to the TRAFAC class OBG-HflX-like GTPase superfamily. OBG GTPase family. As to quaternary structure, monomer. Mg(2+) serves as cofactor.

The protein resides in the cytoplasm. In terms of biological role, an essential GTPase which binds GTP, GDP and possibly (p)ppGpp with moderate affinity, with high nucleotide exchange rates and a fairly low GTP hydrolysis rate. Plays a role in control of the cell cycle, stress response, ribosome biogenesis and in those bacteria that undergo differentiation, in morphogenesis control. The sequence is that of GTPase Obg from Lactiplantibacillus plantarum (strain ATCC BAA-793 / NCIMB 8826 / WCFS1) (Lactobacillus plantarum).